A 339-amino-acid polypeptide reads, in one-letter code: GTPase Obg (339 aa).

In terms of domain architecture, Obg spans 1 to 158 (MKFLDQVDLR…RDLTFELKLM (158 aa)). Disordered regions lie at residues 66–86 (FAEDGEPGGRREQTGASGEDK) and 125–148 (GNAFFKSSTNQAPRESQPGEPGEE). The segment covering 72–86 (PGGRREQTGASGEDK) has biased composition (basic and acidic residues). Over residues 129–138 (FKSSTNQAPR) the composition is skewed to polar residues. The OBG-type G domain occupies 159-329 (ADVGLVGFPN…LKYTLFDTVH (171 aa)). GTP is bound by residues 165–172 (GFPNAGKS), 190–194 (FTTLT), 212–215 (DIPG), 279–282 (SKID), and 310–312 (SAV). 2 residues coordinate Mg(2+): Ser-172 and Thr-192.

The protein belongs to the TRAFAC class OBG-HflX-like GTPase superfamily. OBG GTPase family. Monomer. It depends on Mg(2+) as a cofactor.

It is found in the cytoplasm. In terms of biological role, an essential GTPase which binds GTP, GDP and possibly (p)ppGpp with moderate affinity, with high nucleotide exchange rates and a fairly low GTP hydrolysis rate. Plays a role in control of the cell cycle, stress response, ribosome biogenesis and in those bacteria that undergo differentiation, in morphogenesis control. The sequence is that of GTPase Obg from Salinibacter ruber (strain DSM 13855 / M31).